The following is a 218-amino-acid chain: Probable GTP-binding protein EngB (218 aa).

One can recognise an EngB-type G domain in the interval D44–T218. GTP contacts are provided by residues G52–S59, G79–E83, D97–G100, T164–D167, and T198–S200. Mg(2+) is bound by residues S59 and T81.

Belongs to the TRAFAC class TrmE-Era-EngA-EngB-Septin-like GTPase superfamily. EngB GTPase family. Mg(2+) is required as a cofactor.

In terms of biological role, necessary for normal cell division and for the maintenance of normal septation. The polypeptide is Probable GTP-binding protein EngB (Jannaschia sp. (strain CCS1)).